Consider the following 254-residue polypeptide: Serotonin N-acetyltransferase 1, chloroplastic (254 aa).

A chloroplast-targeting transit peptide spans 1 to 83; it reads MASAASASAS…NSTETVEPPS (83 aa). Residues 119–254 form the N-acetyltransferase domain; sequence VNVYDLQALC…IKGMFWYPRF (136 aa).

The protein resides in the plastid. It is found in the chloroplast. The protein localises to the nucleus. It carries out the reaction a 2-arylethylamine + acetyl-CoA = an N-acetyl-2-arylethylamine + CoA + H(+). The protein operates within aromatic compound metabolism; melatonin biosynthesis; melatonin from serotonin: step 1/2. In terms of biological role, catalyzes the N-acetylation of serotonin into N-acetylserotonin, the penultimate step in the synthesis of melatonin. Catalyzes in vitro the N-acetylation of tryptamine to produce N-acetyltryptamine, 5-methoxytryptamine to produce melatonin and tyramine to produce N-acetyltyramine. Acetyltransferase required for geminivirus infection and systemic spread. In Oryza sativa subsp. indica (Rice), this protein is Serotonin N-acetyltransferase 1, chloroplastic.